The chain runs to 102 residues: ATP-dependent Clp protease adapter protein ClpS (102 aa).

It belongs to the ClpS family. In terms of assembly, binds to the N-terminal domain of the chaperone ClpA.

In terms of biological role, involved in the modulation of the specificity of the ClpAP-mediated ATP-dependent protein degradation. The chain is ATP-dependent Clp protease adapter protein ClpS from Shewanella piezotolerans (strain WP3 / JCM 13877).